Consider the following 627-residue polypeptide: MEGLAGYVYKAASEGRVLTLAALLLNRSESDIKYLLGYVSQHGGQRSTPLIIAARNGHTKVVRLLLEHYRVQTQQTGTVRFDGFVIDGATALWCAAGAGHFEVVKLLVSHGANVNHTTVTNSTPLRAACFDGRLDIVKYLVENNANISIANKYDNTCLMIAAYKGHTDVVRYLLEQHADPNAKAHCGATALHFAAEAGHLEIVRELVKWKAAMMVNGHGMTPLKVAAESCKADVVELLLAHAGCNRRSRIEALELLGASFANDRENYDIMKTYHYLYLAMLERYRDSENIIEKEVLPPIEAYGNRTECRTPQELESIRQDRDALHMEGLIVRERILGSDNIDVSHPIIYRGAVYADNMEFEQCIKLWLHALHLRQKGNRNTHKDLLRFAQVFSQMIHLNEPVKAKDIESVLRCSVLEIEQGMSRIKATQDDDIHTAVDNYECNIFTFLYLVCISTKTQCSEEDQSRINKQIYNLIHLDPRTRDGSTLLHHAVNSSTPVDDFHTNDVCSFPNALVTKLLLDCGADVNAVDNEGNSPLHLIVQYHRPISDFLTLHSIIISLVEAGAHTDMTNKQKKTPLDKSTTGVSEILLKTQMKLSLKCLAARAVRIYNISYQNQIPRTLEEFVKFH.

ANK repeat units follow at residues 45 to 74 (QRST…VQTQ), 87 to 116 (DGAT…NVNH), 120 to 149 (TNST…NISI), 153 to 182 (YDNT…DPNA), 186 to 215 (CGAT…AMMV), and 218 to 248 (HGMT…NRRS). The stretch at 344–377 (SHPIIYRGAVYADNMEFEQCIKLWLHALHLRQKG) is one TPR repeat. ANK repeat units lie at residues 483 to 527 (DGST…DVNA) and 531 to 568 (EGNS…HTDM).

It belongs to the fem-1 family. In terms of assembly, component of a CRL2 E3 ubiquitin-protein ligase complex, also named ECS (Elongin BC-CUL2/5-SOCS-box protein) complex.

It localises to the cytoplasm. The protein resides in the nucleus. It participates in protein modification; protein ubiquitination. In terms of biological role, substrate-recognition component of a Cul2-RING (CRL2) E3 ubiquitin-protein ligase complex of the DesCEND (destruction via C-end degrons) pathway, which recognizes a C-degron located at the extreme C terminus of target proteins, leading to their ubiquitination and degradation. The C-degron recognized by the DesCEND pathway is usually a motif of less than ten residues and can be present in full-length proteins, truncated proteins or proteolytically cleaved forms. The CRL2(FEM1B) complex specifically recognizes proteins ending with -Gly-Leu-Asp-Arg, leading to their ubiquitination and degradation. The protein is Protein fem-1 homolog B of Gallus gallus (Chicken).